The sequence spans 297 residues: Probable endonuclease 4 (297 aa).

Zn(2+) contacts are provided by H69, H110, E145, D179, H182, H214, D227, H229, and E259.

This sequence belongs to the AP endonuclease 2 family. Zn(2+) is required as a cofactor.

It catalyses the reaction Endonucleolytic cleavage to 5'-phosphooligonucleotide end-products.. In terms of biological role, endonuclease IV plays a role in DNA repair. It cleaves phosphodiester bonds at apurinic or apyrimidinic (AP) sites, generating a 3'-hydroxyl group and a 5'-terminal sugar phosphate. In Bacillus subtilis (strain 168), this protein is Probable endonuclease 4.